The primary structure comprises 644 residues: MGCISSKNVSCLTDQGDSPLPEPGLLSTSQQHRVLIDHSLEASHNSKRSRKSRRLGGSDLRIGVSLGSSHRNIEAEQAAAGWPAWLCSAAAEAVHGWVPLKAEAFQKLEKIGQGTYSSVFRAREVETGKMVALKKVKFDNLQPESIRFMAREILILRKLNHPNIMKLEGIVTSRASSSIYLVFEYMEHDLAGLSSNPDIRFTEPQIKCYMKQLLWGLEHCHMRGVIHRDIKASNILVNNKGVLKLGDFGLANVVTPSNKNQLTSRVVTLWYRAPELLMGSTSYGVSVDLWSVGCVFAEILMGKPILKGRTEIEQLHKIYKLCGSPQDSFWKRTKLPHATSFKPQHTYEATLRERCKDLSATGVYLLETLLSMEPDKRGTASSALNSEYFLTRPYACDPSSLPKYPPNKEMDAKYRDDMRRKRANLKLRDSGVGRKHKRPHRAEYDPKNYAKLPIRKDTLEVKNIPNEASRATTTTHGNYYKVSDLPMTTGPASGFAWAVKRRKDPDNISTLTYYQPSSKSQLSGTSVAFAKNTFGLNLKPDNDSVWEVQGNNYDDVIEEVPSHESKLSRIGERHGSLDGSGLDFSQREEDSPKKTLEHLQFGKQSISGPLIFKSGKIDEILQRNESNIRQAVRKSHLQREQDDR.

The 285-residue stretch at 105 to 389 (FQKLEKIGQG…ASSALNSEYF (285 aa)) folds into the Protein kinase domain. Residues 111–119 (IGQGTYSSV) and Lys-134 contribute to the ATP site. Tyr-116 bears the Phosphotyrosine mark. The active-site Proton acceptor is Asp-229. Thr-263 carries the phosphothreonine modification. A Nuclear localization signal motif is present at residues 420–427 (RKRANLKL). Residues 565–576 (SKLSRIGERHGS) show a composition bias toward basic and acidic residues. The interval 565–591 (SKLSRIGERHGSLDGSGLDFSQREEDS) is disordered.

This sequence belongs to the protein kinase superfamily. CMGC Ser/Thr protein kinase family. CDC2/CDKX subfamily. In terms of processing, autophosphorylated. As to expression, expressed specifically in flowers and pollen.

The protein resides in the nucleus. In Arabidopsis thaliana (Mouse-ear cress), this protein is Cyclin-dependent kinase C-2 C.